The sequence spans 356 residues: Thiamine thiazole synthase, chloroplastic (356 aa).

The N-terminal 51 residues, 1–51 (MAAMASTAFAPSVSSTTNKLFDSSFHGAPMSPSLLRLQPIKSSRPNNLSIS), are a transit peptide targeting the chloroplast. Substrate is bound by residues Ala-101, 121–122 (EQ), Gly-129, and Ala-194. Residue Cys-223 is modified to 2,3-didehydroalanine (Cys). Substrate contacts are provided by residues Asp-225, His-240, Met-292, and 302 to 304 (RMG).

It belongs to the THI4 family. In terms of assembly, homooctamer. The cofactor is Fe cation. Post-translationally, during the catalytic reaction, a sulfide is transferred from Cys-223 to a reaction intermediate, generating a dehydroalanine residue.

It localises to the plastid. The protein localises to the chloroplast. It carries out the reaction [ADP-thiazole synthase]-L-cysteine + glycine + NAD(+) = [ADP-thiazole synthase]-dehydroalanine + ADP-5-ethyl-4-methylthiazole-2-carboxylate + nicotinamide + 3 H2O + 2 H(+). Involved in biosynthesis of the thiamine precursor thiazole. Catalyzes the conversion of NAD and glycine to adenosine diphosphate 5-(2-hydroxyethyl)-4-methylthiazole-2-carboxylic acid (ADT), an adenylated thiazole intermediate. The reaction includes an iron-dependent sulfide transfer from a conserved cysteine residue of the protein to a thiazole intermediate. The enzyme can only undergo a single turnover, which suggests it is a suicide enzyme. May have additional roles in adaptation to various stress conditions and in DNA damage tolerance. This Citrus sinensis (Sweet orange) protein is Thiamine thiazole synthase, chloroplastic.